The chain runs to 37 residues: Large ribosomal subunit protein bL36c (37 aa).

Belongs to the bacterial ribosomal protein bL36 family.

It localises to the plastid. It is found in the chloroplast. This Tupiella akineta (Green alga) protein is Large ribosomal subunit protein bL36c.